The sequence spans 118 residues: Large ribosomal subunit protein bL19 (118 aa).

It belongs to the bacterial ribosomal protein bL19 family.

Functionally, this protein is located at the 30S-50S ribosomal subunit interface and may play a role in the structure and function of the aminoacyl-tRNA binding site. The polypeptide is Large ribosomal subunit protein bL19 (Campylobacter hominis (strain ATCC BAA-381 / DSM 21671 / CCUG 45161 / LMG 19568 / NCTC 13146 / CH001A)).